We begin with the raw amino-acid sequence, 315 residues long: Lamassu protein LmuA (315 aa).

Component of antiviral defense system Lamassu type I, composed of LmuA and LmuB. Expression of Lamassu type I in B.subtilis (strain BEST7003) confers resistance to phages phi3T, SpBeta and SPR. In Bacillus sp. (strain NCIM 5461 / CCTCC AB 2011126 / NIO-1130), this protein is Lamassu protein LmuA.